Here is a 160-residue protein sequence, read N- to C-terminus: Putative 4-hydroxy-4-methyl-2-oxoglutarate aldolase (160 aa).

Substrate is bound by residues 76-79 (GDMI) and Arg98. Asp99 serves as a coordination point for a divalent metal cation.

Belongs to the class II aldolase/RraA-like family. In terms of assembly, homotrimer. A divalent metal cation serves as cofactor.

The catalysed reaction is 4-hydroxy-4-methyl-2-oxoglutarate = 2 pyruvate. It carries out the reaction oxaloacetate + H(+) = pyruvate + CO2. Functionally, catalyzes the aldol cleavage of 4-hydroxy-4-methyl-2-oxoglutarate (HMG) into 2 molecules of pyruvate. Also contains a secondary oxaloacetate (OAA) decarboxylase activity due to the common pyruvate enolate transition state formed following C-C bond cleavage in the retro-aldol and decarboxylation reactions. The protein is Putative 4-hydroxy-4-methyl-2-oxoglutarate aldolase of Alcanivorax borkumensis (strain ATCC 700651 / DSM 11573 / NCIMB 13689 / SK2).